A 561-amino-acid chain; its full sequence is Long-chain-fatty-acid--CoA ligase (561 aa).

Tyrosine 213–alanine 224 serves as a coordination point for ATP.

This sequence belongs to the ATP-dependent AMP-binding enzyme family. The cofactor is Mg(2+).

The protein localises to the membrane. It carries out the reaction a long-chain fatty acid + ATP + CoA = a long-chain fatty acyl-CoA + AMP + diphosphate. It functions in the pathway lipid metabolism; fatty acid beta-oxidation. Its function is as follows. Catalyzes the esterification, concomitant with transport, of exogenous long-chain fatty acids into metabolically active CoA thioesters for subsequent degradation or incorporation into phospholipids. The sequence is that of Long-chain-fatty-acid--CoA ligase (fadD) from Escherichia coli O157:H7.